Consider the following 481-residue polypeptide: Glutamate--tRNA ligase (481 aa).

The short motif at 28–38 (PSPTGFLHLGG) is the 'HIGH' region element. A compositionally biased stretch (basic and acidic residues) spans 139 to 148 (RYDGTWRPEP). The segment at 139–159 (RYDGTWRPEPGKTLPPVPADR) is disordered. Positions 260 to 264 (KLSKR) match the 'KMSKS' region motif. Lys263 contacts ATP.

This sequence belongs to the class-I aminoacyl-tRNA synthetase family. Glutamate--tRNA ligase type 1 subfamily. Monomer.

The protein localises to the cytoplasm. The catalysed reaction is tRNA(Glu) + L-glutamate + ATP = L-glutamyl-tRNA(Glu) + AMP + diphosphate. Catalyzes the attachment of glutamate to tRNA(Glu) in a two-step reaction: glutamate is first activated by ATP to form Glu-AMP and then transferred to the acceptor end of tRNA(Glu). This chain is Glutamate--tRNA ligase, found in Bordetella parapertussis (strain 12822 / ATCC BAA-587 / NCTC 13253).